Consider the following 302-residue polypeptide: Actin maturation protease (302 aa).

The segment at 1–26 is disordered; sequence MPHTNEDPTAQQAGVILDPPPPLPPP. The tract at residues 85–205 is peptidase C39-like; it reads SLIQEGPQCG…WAVISGVLFG (121 aa). C93 is a catalytic residue.

This sequence belongs to the ACTMAP family.

It is found in the cytoplasm. The catalysed reaction is N-terminal N(alpha)-acetyl-L-methionyl-L-aspartyl-[protein] + H2O = N-terminal L-aspartyl-[protein] + N-acetyl-L-methionine. The enzyme catalyses N-terminal N(alpha)-acetyl-L-methionyl-L-glutamyl-[protein] + H2O = N-terminal L-glutamyl-[protein] + N-acetyl-L-methionine. It carries out the reaction N-terminal N(alpha)-acetyl-L-cysteinyl-L-aspartyl-[protein] + H2O = N-terminal L-aspartyl-[protein] + N-acetyl-L-cysteine. It catalyses the reaction N-terminal N(alpha)-acetyl-L-cysteinyl-L-glutamyl-[protein] + H2O = N-terminal L-glutamyl-[protein] + N-acetyl-L-cysteine. In terms of biological role, actin maturation protease that specifically mediates the cleavage of immature acetylated N-terminal actin, thereby contributing to actin maturation. Cleaves N-terminal acetylated methionine of immature cytoplasmic beta- and gamma-actin after translation. Cleaves N-terminal acetylated cysteine of muscle alpha-actin after canonical removal of N-terminal methionine. In Xenopus tropicalis (Western clawed frog), this protein is Actin maturation protease.